Reading from the N-terminus, the 1071-residue chain is ATP-dependent helicase/deoxyribonuclease subunit B (1071 aa).

Belongs to the helicase family. AddB/RexB type 2 subfamily. As to quaternary structure, heterodimer of AddA and RexB. Mg(2+) is required as a cofactor.

Functionally, the heterodimer acts as both an ATP-dependent DNA helicase and an ATP-dependent, dual-direction single-stranded exonuclease. Recognizes the chi site generating a DNA molecule suitable for the initiation of homologous recombination. This subunit has 5' -&gt; 3' nuclease activity but not helicase activity. The chain is ATP-dependent helicase/deoxyribonuclease subunit B from Streptococcus pyogenes serotype M1.